The following is a 140-amino-acid chain: uncharacterized protein (140 aa).

A VOC domain is found at 4–127; that stretch reads TLTHLALHVP…AGNYVEFSYG (124 aa).

This is an uncharacterized protein from Pseudomonas aeruginosa (strain ATCC 15692 / DSM 22644 / CIP 104116 / JCM 14847 / LMG 12228 / 1C / PRS 101 / PAO1).